A 293-amino-acid chain; its full sequence is Formamidopyrimidine-DNA glycosylase (293 aa).

The Schiff-base intermediate with DNA role is filled by Pro-2. Glu-3 (proton donor) is an active-site residue. The active-site Proton donor; for beta-elimination activity is Lys-58. Residues His-104, Arg-123, and Lys-166 each contribute to the DNA site. The segment at 257 to 293 (KVYDREGETCKTPACGGTIKRFTQNGRSTFWCPKCQK) adopts an FPG-type zinc-finger fold. The active-site Proton donor; for delta-elimination activity is the Arg-283.

This sequence belongs to the FPG family. Monomer. The cofactor is Zn(2+).

The enzyme catalyses Hydrolysis of DNA containing ring-opened 7-methylguanine residues, releasing 2,6-diamino-4-hydroxy-5-(N-methyl)formamidopyrimidine.. The catalysed reaction is 2'-deoxyribonucleotide-(2'-deoxyribose 5'-phosphate)-2'-deoxyribonucleotide-DNA = a 3'-end 2'-deoxyribonucleotide-(2,3-dehydro-2,3-deoxyribose 5'-phosphate)-DNA + a 5'-end 5'-phospho-2'-deoxyribonucleoside-DNA + H(+). In terms of biological role, involved in base excision repair of DNA damaged by oxidation or by mutagenic agents. Acts as a DNA glycosylase that recognizes and removes damaged bases. Has a preference for oxidized purines, such as 7,8-dihydro-8-oxoguanine (8-oxoG). Has AP (apurinic/apyrimidinic) lyase activity and introduces nicks in the DNA strand. Cleaves the DNA backbone by beta-delta elimination to generate a single-strand break at the site of the removed base with both 3'- and 5'-phosphates. The protein is Formamidopyrimidine-DNA glycosylase of Bradyrhizobium diazoefficiens (strain JCM 10833 / BCRC 13528 / IAM 13628 / NBRC 14792 / USDA 110).